A 140-amino-acid polypeptide reads, in one-letter code: Transcription antitermination protein NusB (140 aa).

Belongs to the NusB family.

Functionally, involved in transcription antitermination. Required for transcription of ribosomal RNA (rRNA) genes. Binds specifically to the boxA antiterminator sequence of the ribosomal RNA (rrn) operons. In Streptococcus pneumoniae serotype 2 (strain D39 / NCTC 7466), this protein is Transcription antitermination protein NusB.